The following is an 84-amino-acid chain: Mitochondrial import inner membrane translocase subunit tim9 (84 aa).

Residues 35-59 (CFSDCVQDFTSSKLSNKESECIAKC) carry the Twin CX3C motif motif. Intrachain disulfides connect Cys-35–Cys-59 and Cys-39–Cys-55.

Belongs to the small Tim family. Heterohexamer; composed of 3 copies of TIM9 and 3 copies of TIM10, named soluble 70 kDa complex. Associates with the TIM22 complex, whose core is composed of TIM22 and TIM54. Interacts with the transmembrane regions of multi-pass transmembrane proteins in transit.

It localises to the mitochondrion inner membrane. Mitochondrial intermembrane chaperone that participates in the import and insertion of multi-pass transmembrane proteins into the mitochondrial inner membrane. Also required for the transfer of beta-barrel precursors from the TOM complex to the sorting and assembly machinery (SAM complex) of the outer membrane. Acts as a chaperone-like protein that protects the hydrophobic precursors from aggregation and guide them through the mitochondrial intermembrane space. The polypeptide is Mitochondrial import inner membrane translocase subunit tim9 (tim9) (Schizosaccharomyces pombe (strain 972 / ATCC 24843) (Fission yeast)).